Here is a 535-residue protein sequence, read N- to C-terminus: Sodium/hydrogen exchanger 1 (535 aa).

Over 1 to 21 the chain is Cytoplasmic; that stretch reads MGMEVAAARLGALYTTSDYAS. A helical transmembrane segment spans residues 22–42; sequence VVSINLFVALLCACIVLGHLL. The Vacuolar segment spans residues 43–46; that stretch reads EENR. Residues 47 to 67 traverse the membrane as a helical segment; it reads WVNESITALIIGLCTGVVILL. Over 68–75 the chain is Cytoplasmic; sequence MTKGKSSH. A helical membrane pass occupies residues 76 to 96; sequence LFVFSEDLFFIYLLPPIIFNA. The Vacuolar portion of the chain corresponds to 97-114; the sequence is GFQVKKKQFFRNFMTITL. The chain crosses the membrane as a helical span at residues 115 to 135; the sequence is FGAVGTMISFFTISIAAIAIF. Over 136-137 the chain is Cytoplasmic; sequence SR. Residues 138 to 158 form a helical membrane-spanning segment; the sequence is MNIGTLDVGDFLAIGAIFSAT. The Vacuolar portion of the chain corresponds to 159 to 173; sequence DSVCTLQVLNQDETP. A helical transmembrane segment spans residues 174 to 194; it reads FLYSLVFGEGVVNDATSIVLF. The Cytoplasmic portion of the chain corresponds to 195–218; it reads NALQNFDLVHIDAAVVLKFLGNFF. A helical transmembrane segment spans residues 219-239; sequence YLFLSSTFLGVFAGLLSAYII. Residues 240 to 264 lie on the Vacuolar side of the membrane; it reads KKLYIGRHSTDREVALMMLMAYLSY. The helical transmembrane segment at 265-285 threads the bilayer; it reads MLAELLDLSGILTVFFCGIVM. The Cytoplasmic segment spans residues 286 to 304; that stretch reads SHYTWHNVTESSRVTTKHA. Residues 305 to 325 traverse the membrane as a helical segment; that stretch reads FATLSFIAETFLFLYVGMDAL. Residues 326 to 344 lie on the Vacuolar side of the membrane; it reads DIEKWEFASDRPGKSIGIS. Residues 345-365 form a helical membrane-spanning segment; sequence SILLGLVLIGRAAFVFPLSFL. Over 366-381 the chain is Cytoplasmic; sequence SNLTKKAPNEKITWRQ. A helical membrane pass occupies residues 382-402; that stretch reads QVVIWWAGLMRGAVSIALAYN. Residues 403-415 are Vacuolar-facing; sequence KFTRSGHTQLHGN. The helical transmembrane segment at 416-436 threads the bilayer; it reads AIMITSTITVVLFSTMVFGMM. Residues 437 to 535 lie on the Cytoplasmic side of the membrane; sequence TKPLIRLLLP…SPTEQSHGGR (99 aa). The interval 452-478 is disordered; it reads VTSEPSSPKSLHSPLLTSMQGSDLEST. Positions 454–469 are enriched in low complexity; sequence SEPSSPKSLHSPLLTS.

This sequence belongs to the monovalent cation:proton antiporter 1 (CPA1) transporter (TC 2.A.36) family.

The protein localises to the vacuole membrane. It carries out the reaction Na(+)(in) + H(+)(out) = Na(+)(out) + H(+)(in). The enzyme catalyses K(+)(in) + H(+)(out) = K(+)(out) + H(+)(in). Vacuolar antiporter that acts in low affinity electroneutral exchange of protons H(+) for cations such as Na(+) or K(+) across membranes. Plays important roles in the transport of Na(+) and K(+) accumulated in the cytoplasm into vacuoles, and is involved in salt stress tolerance. This is Sodium/hydrogen exchanger 1 from Oryza sativa subsp. japonica (Rice).